The primary structure comprises 473 residues: Serine carboxypeptidase-like 42 (473 aa).

An N-terminal signal peptide occupies residues 1-26; the sequence is MASVSWRAVAVAMVVVLLSLQWFAKG. Cystine bridges form between Cys87/Cys346, Cys247/Cys264, and Cys289/Cys314. A glycan (N-linked (GlcNAc...) asparagine) is linked at Asn138. Residue Ser179 is part of the active site. An N-linked (GlcNAc...) asparagine glycan is attached at Asn259. N-linked (GlcNAc...) asparagine glycosylation is found at Asn335 and Asn351. Catalysis depends on residues Asp383 and His440. N-linked (GlcNAc...) asparagine glycosylation occurs at Asn465.

This sequence belongs to the peptidase S10 family. As to expression, expression not detected.

The protein localises to the secreted. Functionally, probable carboxypeptidase. This Arabidopsis thaliana (Mouse-ear cress) protein is Serine carboxypeptidase-like 42 (SCPL42).